Consider the following 953-residue polypeptide: Isoleucine--tRNA ligase (953 aa).

Positions 57–67 (PYANGDIHIGH) match the 'HIGH' region motif. An L-isoleucyl-5'-AMP-binding site is contributed by glutamate 582. A 'KMSKS' region motif is present at residues 623–627 (KMSKS). Position 626 (lysine 626) interacts with ATP. Zn(2+) is bound by residues cysteine 916, cysteine 919, cysteine 936, and cysteine 939.

The protein belongs to the class-I aminoacyl-tRNA synthetase family. IleS type 1 subfamily. In terms of assembly, monomer. Zn(2+) is required as a cofactor.

It localises to the cytoplasm. It carries out the reaction tRNA(Ile) + L-isoleucine + ATP = L-isoleucyl-tRNA(Ile) + AMP + diphosphate. Functionally, catalyzes the attachment of isoleucine to tRNA(Ile). As IleRS can inadvertently accommodate and process structurally similar amino acids such as valine, to avoid such errors it has two additional distinct tRNA(Ile)-dependent editing activities. One activity is designated as 'pretransfer' editing and involves the hydrolysis of activated Val-AMP. The other activity is designated 'posttransfer' editing and involves deacylation of mischarged Val-tRNA(Ile). This is Isoleucine--tRNA ligase from Bordetella petrii (strain ATCC BAA-461 / DSM 12804 / CCUG 43448).